The following is a 496-amino-acid chain: MFCHLRPMRRLCLEKIFPHWFPFSRALSGAEAVNALRPFYFAVHPDFFGQHPVEREINENSLKRLSVYLENLQKPGFKSLKPTQLTFYVRETDQSSSDGQEPFSTSGFRAVKFTLHTRDLLSTVLYILNSCSLSVEHIQSLNTNMHTQPLKEAKRMPDRPIKWDKSYYSFTGFKDPDEDLEQVSRVETTLTSWLDNNGKSAVKKLKNSLPLRKELDRLKDELSHQLQLSDIRWQRSWGIAHRCSQLHSLSRLAQQNLETLKKAKGCTIIFTDRSGMSAVGHVMLGTMDVHHHWTKLFERLPSYFDLQRRLMILEDQISYLLGGIQVVYIEELQPVLTLEEYYSLLDVFYNRLLKSRILFHPRSLRGLQMILNSDRYAPSLHELGHFNIPTLCDPANLQWFILTKAQQARENMKRKEELKVIENELIQASTKKFSLEKLYKEPSISSIQMVDCCKRLLEQSLPYLHGMHLCISHFYSVMQDGDLCIPWNWKNGEAIK.

Residues 404-437 are a coiled coil; that stretch reads KAQQARENMKRKEELKVIENELIQASTKKFSLEK.

It is found in the mitochondrion. Its function is as follows. May regulate T-cell apoptosis. This Homo sapiens (Human) protein is T-cell activation inhibitor, mitochondrial (TCAIM).